The primary structure comprises 159 residues: MAVFVANESGVTDFDEVTLAALARFVLDTMKVNPLAELSVMLVEIDAMTDLHVRYMAEEGPTDVLAFPQDEAFEPSWSESPEEDPTTLLGDVVLCPEVARRQAAQAGHGMERELHILCTHGILHLLGYDHAEPEEEREMWKLQNSLLASWDTAAGTGAS.

Zn(2+) contacts are provided by H120, H124, and H130.

This sequence belongs to the endoribonuclease YbeY family. It depends on Zn(2+) as a cofactor.

Its subcellular location is the cytoplasm. Its function is as follows. Single strand-specific metallo-endoribonuclease involved in late-stage 70S ribosome quality control and in maturation of the 3' terminus of the 16S rRNA. In Parafrankia sp. (strain EAN1pec), this protein is Endoribonuclease YbeY.